The sequence spans 316 residues: D-alanine--D-alanine ligase (316 aa).

The ATP-grasp domain occupies 108–310 (ERYEELSVVK…FDELVDLIIK (203 aa)). Position 138–193 (138–193 (EEKIGLPCVVKPRKEGSSIGTHICFSKEELLDALKNEFKNYDEMIVQEYIKGKEIT)) interacts with ATP. Residues D265, E277, and N279 each coordinate Mg(2+).

It belongs to the D-alanine--D-alanine ligase family. The cofactor is Mg(2+). Mn(2+) serves as cofactor.

The protein resides in the cytoplasm. The catalysed reaction is 2 D-alanine + ATP = D-alanyl-D-alanine + ADP + phosphate + H(+). It participates in cell wall biogenesis; peptidoglycan biosynthesis. Cell wall formation. The sequence is that of D-alanine--D-alanine ligase from Fervidobacterium nodosum (strain ATCC 35602 / DSM 5306 / Rt17-B1).